An 883-amino-acid polypeptide reads, in one-letter code: MSHDLHESLRDNVRILGDSLGRTIADDLGDGFVDKIETIRGLAKRGRQDDSESRRELIEYLRALPEKDLLPVTRAFNQFLNFSNIAEQHYRARFRRVEDYKPGTQPDLGELLERIRGAGHAPRKLVETLAAMRVELVLTAHPTEVIRRTLIRKYDAIDECLTTMEGATEREEIAARARGRLEELISQAWHTDEIRHERPTPVDEAKWGFAVIENSLWQAVPDFHRELDDLLLASAGERLPLDAAPLRFASWMGGDRDGNPNVTARVTEEVLLLGRWMAADLYARDLLRLKSELSMWKANGALRAEVGSDPEPYRALLKRLLARVEATRDWAKARLDGRPFDSNVAIIETRDQLYAPLLSCYRSLCDVGLDTIANGALLDTLRRVAVFGVSLTKLDIRQEAGRHAQVFDELSDCLGLGHYRDWDEAQRQDFLLEELESPRPLIPRRWDCSAETREVIDTFRVIAREHREALGTYVISMAGQPSDVLAVALLMKEVGGDLQLPIAPLFETLDDLNRAGDVIERLLSLPGYRRMAGDGQEVMIGYSDSAKDAGQLAAAWAQYRAQEQLVGICRQHDVALTLFHGRGGTVGRGGGPAHAAILSQPPGSVNGSLRVTEQGEMIRFKFGQPDIALRSMEIYACAVLEATLLPPPDPEPVWREEMDRLSDIAHRAYVGVVREDPDFVPYFRSVTPESALGRLPLGSRPAKRRQEGGVESLRAIPWIFAWTQTRLMLPAWLGSGEAFATRLDEPGGRERLRDMRARWPFFGTYLDMLEMLLAKADPDIAAYYERRLVDEPALQALGKSLRERLSRLETVLLDILDQDTLLEHTPLIRQAIEVRNPYIDPLHGLQAELLQRNRDADGAISPELSRALMVTMAGIAAGLRNTG.

Active-site residues include His141 and Lys547.

This sequence belongs to the PEPCase type 1 family. Mg(2+) serves as cofactor.

It catalyses the reaction oxaloacetate + phosphate = phosphoenolpyruvate + hydrogencarbonate. Functionally, forms oxaloacetate, a four-carbon dicarboxylic acid source for the tricarboxylic acid cycle. This Chromohalobacter salexigens (strain ATCC BAA-138 / DSM 3043 / CIP 106854 / NCIMB 13768 / 1H11) protein is Phosphoenolpyruvate carboxylase.